We begin with the raw amino-acid sequence, 180 residues long: Cancer/testis antigen 1 (180 aa).

2 stretches are compositionally biased toward gly residues: residues 1–47 and 55–66; these read MQAE…GPRG and GPGGGAPRGPHG. A disordered region spans residues 1-66; sequence MQAEGRGTGG…GGGAPRGPHG (66 aa).

The protein belongs to the CTAG/PCC1 family. In terms of tissue distribution, expressed in testis and ovary and in a wide variety of cancers. Detected in uterine myometrium. Expressed from 18 weeks until birth in human fetal testis. In the adult testis, is strongly expressed in spermatogonia and in primary spermatocytes, but not in post-meiotic cells or in testicular somatic cells (at protein level).

The protein resides in the cytoplasm. The polypeptide is Cancer/testis antigen 1 (CTAG1A) (Homo sapiens (Human)).